Consider the following 231-residue polypeptide: Large ribosomal subunit protein uL1 (231 aa).

This sequence belongs to the universal ribosomal protein uL1 family. As to quaternary structure, part of the 50S ribosomal subunit.

Functionally, binds directly to 23S rRNA. The L1 stalk is quite mobile in the ribosome, and is involved in E site tRNA release. Protein L1 is also a translational repressor protein, it controls the translation of the L11 operon by binding to its mRNA. This chain is Large ribosomal subunit protein uL1, found in Thioalkalivibrio sulfidiphilus (strain HL-EbGR7).